Consider the following 69-residue polypeptide: Pleurain-A2 (69 aa).

An N-terminal signal peptide occupies residues 1–22; the sequence is MFTLKKTLLLLYFLGTISISLC. Positions 23 to 43 are excised as a propeptide; sequence KQERDADEDDGRKMTEEEVKR. A disulfide bridge connects residues C63 and C69.

As to expression, expressed by the skin glands.

Its subcellular location is the secreted. In terms of biological role, antimicrobial peptide. Has activity against the Gram-positive bacterium S.aureus ATCC2592 (MIC=15 ug/ml), the Gram-negative bacteria E.coli ATCC25922 (MIC=60 ug/ml), B.dysenteriae (MIC=60 ug/ml), H.pylori NTCT11637 (MIC=30 ug/ml), and the fungus C.albicans ATCC2002 (MIC=30 ug/ml). Has little hemolytic activity on rabbit red blood cells. The sequence is that of Pleurain-A2 from Nidirana pleuraden (Yunnan pond frog).